The chain runs to 70 residues: Large ribosomal subunit protein bL31 (70 aa).

The Zn(2+) site is built by Cys-16, Cys-18, Cys-37, and Cys-40.

The protein belongs to the bacterial ribosomal protein bL31 family. Type A subfamily. Part of the 50S ribosomal subunit. It depends on Zn(2+) as a cofactor.

Its function is as follows. Binds the 23S rRNA. The protein is Large ribosomal subunit protein bL31 of Shewanella sediminis (strain HAW-EB3).